A 435-amino-acid chain; its full sequence is 3-phosphoshikimate 1-carboxyvinyltransferase (435 aa).

The 3-phosphoshikimate site is built by Lys-22, Ser-23, and Arg-27. Residue Lys-22 participates in phosphoenolpyruvate binding. 2 residues coordinate phosphoenolpyruvate: Gly-94 and Arg-122. 3-phosphoshikimate contacts are provided by Ser-166, Gln-168, Asp-314, and Lys-341. Residue Gln-168 coordinates phosphoenolpyruvate. Asp-314 serves as the catalytic Proton acceptor. Arg-345 and Arg-388 together coordinate phosphoenolpyruvate.

Belongs to the EPSP synthase family. In terms of assembly, monomer.

Its subcellular location is the cytoplasm. The enzyme catalyses 3-phosphoshikimate + phosphoenolpyruvate = 5-O-(1-carboxyvinyl)-3-phosphoshikimate + phosphate. Its pathway is metabolic intermediate biosynthesis; chorismate biosynthesis; chorismate from D-erythrose 4-phosphate and phosphoenolpyruvate: step 6/7. Its function is as follows. Catalyzes the transfer of the enolpyruvyl moiety of phosphoenolpyruvate (PEP) to the 5-hydroxyl of shikimate-3-phosphate (S3P) to produce enolpyruvyl shikimate-3-phosphate and inorganic phosphate. This chain is 3-phosphoshikimate 1-carboxyvinyltransferase, found in Vesicomyosocius okutanii subsp. Calyptogena okutanii (strain HA).